We begin with the raw amino-acid sequence, 185 residues long: Ribosome-recycling factor (185 aa).

This sequence belongs to the RRF family.

Its subcellular location is the cytoplasm. In terms of biological role, responsible for the release of ribosomes from messenger RNA at the termination of protein biosynthesis. May increase the efficiency of translation by recycling ribosomes from one round of translation to another. This is Ribosome-recycling factor from Lactococcus lactis subsp. lactis (strain IL1403) (Streptococcus lactis).